A 308-amino-acid chain; its full sequence is Probable 5-dehydro-4-deoxyglucarate dehydratase (308 aa).

The protein belongs to the DapA family.

It carries out the reaction 5-dehydro-4-deoxy-D-glucarate + H(+) = 2,5-dioxopentanoate + CO2 + H2O. It functions in the pathway carbohydrate acid metabolism; D-glucarate degradation; 2,5-dioxopentanoate from D-glucarate: step 2/2. The polypeptide is Probable 5-dehydro-4-deoxyglucarate dehydratase (ycbC) (Bacillus subtilis (strain 168)).